The sequence spans 354 residues: Histidinol-phosphate aminotransferase (354 aa).

An N6-(pyridoxal phosphate)lysine modification is found at Lys-222.

Belongs to the class-II pyridoxal-phosphate-dependent aminotransferase family. Histidinol-phosphate aminotransferase subfamily. In terms of assembly, homodimer. Requires pyridoxal 5'-phosphate as cofactor.

The catalysed reaction is L-histidinol phosphate + 2-oxoglutarate = 3-(imidazol-4-yl)-2-oxopropyl phosphate + L-glutamate. Its pathway is amino-acid biosynthesis; L-histidine biosynthesis; L-histidine from 5-phospho-alpha-D-ribose 1-diphosphate: step 7/9. In Leuconostoc citreum (strain KM20), this protein is Histidinol-phosphate aminotransferase.